We begin with the raw amino-acid sequence, 271 residues long: PH domain-containing protein ECU06_0670 (271 aa).

The segment at 26-145 (AKKTLDSSES…EKKNDAFIPP (120 aa)) is disordered. Composition is skewed to basic and acidic residues over residues 42 to 64 (EVGE…EPAM), 92 to 120 (QPEK…LLDK), and 128 to 140 (EENA…KKND). In terms of domain architecture, PH spans 166-267 (NTVVEGWMWK…WVEKLNETIR (102 aa)).

This is PH domain-containing protein ECU06_0670 from Encephalitozoon cuniculi (strain GB-M1) (Microsporidian parasite).